The chain runs to 140 residues: Nucleoside diphosphate kinase (140 aa).

ATP is bound by residues Lys11, Phe59, Arg87, Thr93, Arg104, and Asn114. His117 functions as the Pros-phosphohistidine intermediate in the catalytic mechanism.

It belongs to the NDK family. In terms of assembly, homotetramer. It depends on Mg(2+) as a cofactor.

The protein resides in the cytoplasm. It catalyses the reaction a 2'-deoxyribonucleoside 5'-diphosphate + ATP = a 2'-deoxyribonucleoside 5'-triphosphate + ADP. The catalysed reaction is a ribonucleoside 5'-diphosphate + ATP = a ribonucleoside 5'-triphosphate + ADP. In terms of biological role, major role in the synthesis of nucleoside triphosphates other than ATP. The ATP gamma phosphate is transferred to the NDP beta phosphate via a ping-pong mechanism, using a phosphorylated active-site intermediate. In Rhodopseudomonas palustris (strain ATCC BAA-98 / CGA009), this protein is Nucleoside diphosphate kinase.